Here is a 108-residue protein sequence, read N- to C-terminus: uncharacterized protein (108 aa).

A helical transmembrane segment spans residues 15–37 (SYYFYIFWNFFLPMFIVYRGFGL).

Its subcellular location is the membrane. This is an uncharacterized protein from Archaeoglobus fulgidus (strain ATCC 49558 / DSM 4304 / JCM 9628 / NBRC 100126 / VC-16).